A 506-amino-acid polypeptide reads, in one-letter code: Arylsulfatase A (506 aa).

An N-terminal signal peptide occupies residues 1–17 (MALGTLFLALAAGLSTA). Positions 28, 29, and 68 each coordinate Ca(2+). Residue Cys68 is the Nucleophile of the active site. Cys68 carries the 3-oxoalanine (Cys) modification. Substrate is bound at residue Lys122. Residue His124 is part of the active site. Ser149 contributes to the substrate binding site. Disulfide bonds link Cys155–Cys171 and Cys160–Cys167. N-linked (GlcNAc...) asparagine glycosylation is present at Asn157. A glycan (N-linked (GlcNAc...) asparagine) is linked at Asn183. Position 228 (His228) interacts with substrate. Ca(2+) contacts are provided by Asp280 and Asn281. Cystine bridges form between Cys299/Cys413, Cys487/Cys499, Cys488/Cys501, and Cys492/Cys498. A substrate-binding site is contributed by Lys301. The N-linked (GlcNAc...) asparagine glycan is linked to Asn349.

Belongs to the sulfatase family. Homodimer at neutral pH and homooctamer at acidic pH. Exists both as a single chain of 58 kDa (component A) or as a chain of 50 kDa (component B) linked by disulfide bond(s) to a 7 kDa chain (component C). Interacts with SUMF1. It depends on Ca(2+) as a cofactor. Post-translationally, the conversion to 3-oxoalanine (also known as C-formylglycine, FGly), of a serine or cysteine residue in prokaryotes and of a cysteine residue in eukaryotes, is critical for catalytic activity. This post-translational modification is severely defective in multiple sulfatase deficiency (MSD).

It localises to the endoplasmic reticulum. The protein resides in the lysosome. The catalysed reaction is an N-acyl-1-beta-D-(3-O-sulfo)-galactosyl-sphing-4-enine + H2O = a beta-D-galactosyl-(1&lt;-&gt;1')-N-acylsphing-4-enine + sulfate + H(+). In terms of biological role, hydrolyzes cerebroside sulfate. This is Arylsulfatase A (Arsa) from Mus musculus (Mouse).